The sequence spans 276 residues: Non-homologous end joining protein Ku (276 aa).

The region spanning 11-177 is the Ku domain; it reads ISFGLVHIPI…PEEIRSMEPL (167 aa). The disordered stretch occupies residues 256–276; it reads QVKTQQKKEAAPKKERRRKTS.

It belongs to the prokaryotic Ku family. In terms of assembly, homodimer. Interacts with LigD.

In terms of biological role, with LigD forms a non-homologous end joining (NHEJ) DNA repair enzyme, which repairs dsDNA breaks with reduced fidelity. Binds linear dsDNA with 5'- and 3'- overhangs but not closed circular dsDNA nor ssDNA. Recruits and stimulates the ligase activity of LigD. The polypeptide is Non-homologous end joining protein Ku (Heliobacterium modesticaldum (strain ATCC 51547 / Ice1)).